The following is a 273-amino-acid chain: MATYLVGDLQGCYDELQLLLETVQFNPVQDKLYLVGDLVARGDKSLECLRFVKSLGAAAQMVLGNHDLHLISTALGIKKVSLQDHVEAIFTAPDFVELIDWLRHQPLLVHDEKCDFVMSHAGISPDWDLDTAKSCAREVENELQHGDYHYLISNMYDNQPDRWSADLQGLQRLRYSINVFTRMRFCYRDHRLDFACKASVEKAPQELIPWFNLDNPLFKVQNLVFGHWASLVDTPTPANIYALDTGCVWGNRMTMLRWEDKQYFVQGALKDYF.

Belongs to the Ap4A hydrolase family.

The catalysed reaction is P(1),P(4)-bis(5'-adenosyl) tetraphosphate + H2O = 2 ADP + 2 H(+). Functionally, hydrolyzes diadenosine 5',5'''-P1,P4-tetraphosphate to yield ADP. The protein is Bis(5'-nucleosyl)-tetraphosphatase, symmetrical of Histophilus somni (strain 2336) (Haemophilus somnus).